A 251-amino-acid polypeptide reads, in one-letter code: Aspartate/glutamate leucyltransferase (251 aa).

This sequence belongs to the R-transferase family. Bpt subfamily.

It is found in the cytoplasm. It catalyses the reaction N-terminal L-glutamyl-[protein] + L-leucyl-tRNA(Leu) = N-terminal L-leucyl-L-glutamyl-[protein] + tRNA(Leu) + H(+). It carries out the reaction N-terminal L-aspartyl-[protein] + L-leucyl-tRNA(Leu) = N-terminal L-leucyl-L-aspartyl-[protein] + tRNA(Leu) + H(+). Functionally, functions in the N-end rule pathway of protein degradation where it conjugates Leu from its aminoacyl-tRNA to the N-termini of proteins containing an N-terminal aspartate or glutamate. The chain is Aspartate/glutamate leucyltransferase from Nitrosospira multiformis (strain ATCC 25196 / NCIMB 11849 / C 71).